The chain runs to 1501 residues: Opaque-specific ABC transporter CDR3 (1501 aa).

Residues Met-1 to Asp-502 are Cytoplasmic-facing. Positions Thr-58 to Phe-87 are disordered. In terms of domain architecture, ABC transporter 1 spans Lys-140–Asp-395. The chain crosses the membrane as a helical span at residues Ile-503–Val-523. Asn-530 carries N-linked (GlcNAc...) asparagine glycosylation. Transmembrane regions (helical) follow at residues Val-540–Tyr-560, Phe-589–Phe-609, Gly-614–Phe-634, Leu-653–Gly-673, and Phe-755–Thr-775. Residues Asn-776–Ser-1175 are Cytoplasmic-facing. Residues Phe-840–Ala-1083 enclose the ABC transporter 2 domain. Gly-876–Thr-883 lines the ATP pocket. The next 7 helical transmembrane spans lie at Tyr-1176–Tyr-1196, Ile-1212–Thr-1232, Ile-1261–Leu-1281, Leu-1297–Ile-1317, Tyr-1325–Ala-1345, Phe-1353–Leu-1375, and Gly-1451–Phe-1471.

The protein belongs to the ABC transporter superfamily. ABCG family. PDR (TC 3.A.1.205) subfamily.

The protein localises to the membrane. This Candida albicans (Yeast) protein is Opaque-specific ABC transporter CDR3 (CDR3).